The following is a 194-amino-acid chain: Ribonuclease HII (194 aa).

Residues 16-194 form the RNase H type-2 domain; it reads CIVAGIDEAG…PYHRRSFRCC (179 aa). Residues Asp22, Glu23, and Asp113 each contribute to the a divalent metal cation site.

The protein belongs to the RNase HII family. It depends on Mn(2+) as a cofactor. Requires Mg(2+) as cofactor.

The protein localises to the cytoplasm. It carries out the reaction Endonucleolytic cleavage to 5'-phosphomonoester.. In terms of biological role, endonuclease that specifically degrades the RNA of RNA-DNA hybrids. In Rickettsia massiliae (strain Mtu5), this protein is Ribonuclease HII.